The chain runs to 318 residues: Beta-sarcoglycan (318 aa).

The disordered stretch occupies residues 1-32 (MAAAAAAAAEQQSSNGPVKKSMREKAVERRNV). At 1–65 (MAAAAAAAAE…GLRGRKGNLA (65 aa)) the chain is on the cytoplasmic side. A compositionally biased stretch (basic and acidic residues) spans 21–32 (SMREKAVERRNV). The chain crosses the membrane as a helical; Signal-anchor for type II membrane protein span at residues 66-86 (ICVIVLLFLLAVINLIITLVI). At 87–318 (WAVIRIGPNG…VSDNPCGNTH (232 aa)) the chain is on the extracellular side. 3 N-linked (GlcNAc...) asparagine glycosylation sites follow: Asn158, Asn211, and Asn258. Cystine bridges form between Cys288/Cys314 and Cys290/Cys307.

It belongs to the sarcoglycan beta/delta/gamma/zeta family. Cross-link to form 2 major subcomplexes: one consisting of SGCB, SGCD and SGCG and the other consisting of SGCB and SGCD. The association between SGCB and SGCG is particularly strong while SGCA is loosely associated with the other sarcoglycans. In terms of processing, disulfide bonds are present.

Its subcellular location is the cell membrane. The protein localises to the sarcolemma. The protein resides in the cytoplasm. It is found in the cytoskeleton. In terms of biological role, component of the sarcoglycan complex, a subcomplex of the dystrophin-glycoprotein complex which forms a link between the F-actin cytoskeleton and the extracellular matrix. The protein is Beta-sarcoglycan (SGCB) of Oryctolagus cuniculus (Rabbit).